A 470-amino-acid polypeptide reads, in one-letter code: Tigger transposable element-derived protein 3 (470 aa).

The 53-residue stretch at 3-55 (LNTKKKLHALSLAEKIQVLELLDESKMSQSEVARRFQVSQPQISRICKNKEKL) folds into the HTH psq-type domain. DNA-binding regions (H-T-H motif) lie at residues 31–51 (QSEV…ICKN) and 100–130 (PMLL…WKRR). One can recognise an HTH CENPB-type domain in the interval 67-137 (ERKRKRESKY…KRRNNVGFGT (71 aa)). Positions 167–360 (FSPEDVFGCA…VPRQLILSSF (194 aa)) constitute a DDE-1 domain. Residues 402 to 421 (DPGPRVCKEETGTEDSGREE) show a composition bias toward basic and acidic residues. The segment at 402–426 (DPGPRVCKEETGTEDSGREEDGFEP) is disordered.

This sequence belongs to the tigger transposable element derived protein family.

It is found in the nucleus. The polypeptide is Tigger transposable element-derived protein 3 (Tigd3) (Mus musculus (Mouse)).